The sequence spans 228 residues: Vacuolar-sorting protein snf7 (228 aa).

Coiled-coil stretches lie at residues 25–94 and 125–226; these read ILGL…QINA and EKVD…QAEM.

This sequence belongs to the SNF7 family. In terms of assembly, a component of the endosomal sorting required for transport complex III (ESCRT-III).

The protein localises to the cytoplasm. The protein resides in the endosome membrane. Its function is as follows. Required for the sorting and concentration of proteins resulting in the entry of these proteins into the invaginating vesicles of the multivesicular body (MVB). Also required for the proteolytic cleavage of the transcription factor pacc-1 in response to alkaline ambient pH. The sequence is that of Vacuolar-sorting protein snf7 (vsp-3) from Neurospora crassa (strain ATCC 24698 / 74-OR23-1A / CBS 708.71 / DSM 1257 / FGSC 987).